Here is a 575-residue protein sequence, read N- to C-terminus: MSTSSLRRQMKNIVHNYSEAEIKVREATSNDPWGPSSSLMSEIADLTYNVVAFSEIMSMIWKRLNDHGKNWRHVYKAMTLMEYLIKTGSERVSQQCKENMYAVQTLKDFQYVDRDGKDQGVNVREKAKQLVALLRDEDRLREERAHALKTKEKLAQTATASSAAVGSGPPPEAEQAWPQSSGEEELQLQLALAMSKEEADQPPSCGPEDDVQLQLALSLSREEHDKEERIRRGDDLRLQMAIEESKRETGGKEESSLMDLADVFTTPAPPQASDPWGGPASVPTAVPVAAAASDPWGGPAVPPAADPWGGAAPTPASGDPWRPAAPTGPSVDPWGGTPAPAAGEGPTPDPWGSSDGGAPVSGPPSSDPWAPAPAFSDPWGGSPAKPSSNGTAVGGFDTEPDEFSDFDRLRTALPTSGSSTGELELLAGEVPARSPGAFDMSGVGGSLAESVGSPPPAATPTPTPPTRKTPESFLGPNAALVDLDSLVSRPGPTPPGSKASNPFLPSGAPPTGPSVTNPFQPAPPATLTLNQLRLSPVPPVPGAPPTYISPLGGGPGLPPMMPPGPPAPNTNPFLL.

A 1,2-diacyl-sn-glycero-3-phospho-(1D-myo-inositol-4,5-bisphosphate)-binding residues include K11, R25, N30, R63, and H73. Residues N12–R144 form the ENTH domain. The tract at residues T150–L186 is disordered. Low complexity predominate over residues T157–S167. 3 consecutive UIM domains span residues E183–P202, E208–E227, and G233–K252. The disordered stretch occupies residues F264–L575. A run of 8 repeats spans residues D274 to W276, D294 to W296, D306 to W308, D319 to W321, D332 to W334, D349 to W351, D367 to W369, and D377 to W379. The interval D274–W379 is 8 X 3 AA repeats of D-P-W. 2 stretches are compositionally biased toward low complexity: residues P279–P299 and D306–A316. A compositionally biased stretch (low complexity) spans D332 to P346. Low complexity predominate over residues D367–W379. The residue at position 382 (S382) is a Phosphoserine. The [DE]-X(1,2)-F-X-X-[FL]-X-X-X-R motif signature appears at D401 to R410. Phosphoserine occurs at positions 418 and 419. Phosphothreonine is present on T420. Phosphoserine occurs at positions 434, 446, and 453. Over residues S453–R467 the composition is skewed to pro residues. A phosphothreonine mark is found at T459, T463, and T469. Position 472 is a phosphoserine (S472). T493 is modified (phosphothreonine). 2 tandem repeats follow at residues N501–F503 and N517–F519. The tract at residues N501–F573 is 3 X 3 AA repeats of N-P-F. R533 is modified (omega-N-methylarginine). Over residues G556 to N569 the composition is skewed to pro residues. Repeat 3 spans residues N571–F573.

Belongs to the epsin family. As to quaternary structure, monomer. Binds clathrin and ZBTB16/ZNF145. Binds ubiquitinated proteins. Interacts with RALBP1 in a complex also containing NUMB and TFAP2A during interphase and mitosis. Interacts with AP2B1. Interacts with UBQLN2. Interacts with ITSN1. Interacts with AP2A1 and AP2A2. Interacts with REPS2; the interaction is direct. Interacts with EPS15; the interaction is direct. Interacts with ENTREP1. In terms of processing, phosphorylated on serine and/or threonine residues in mitotic cells. Phosphorylation reduces interaction with REPS2, AP-2 and the membrane fraction. Depolarization of synaptosomes results in dephosphorylation. Post-translationally, ubiquitinated.

Its subcellular location is the cytoplasm. The protein localises to the cell membrane. The protein resides in the nucleus. It is found in the membrane. It localises to the clathrin-coated pit. Its function is as follows. Binds to membranes enriched in phosphatidylinositol 4,5-bisphosphate (PtdIns(4,5)P2). Modifies membrane curvature and facilitates the formation of clathrin-coated invaginations. Regulates receptor-mediated endocytosis. The sequence is that of Epsin-1 (Epn1) from Mus musculus (Mouse).